An 85-amino-acid chain; its full sequence is ATP synthase subunit c (85 aa).

Transmembrane regions (helical) follow at residues 19 to 39 (LGAA…IGKI) and 62 to 82 (IIAA…CLLV).

The protein belongs to the ATPase C chain family. In terms of assembly, F-type ATPases have 2 components, F(1) - the catalytic core - and F(0) - the membrane proton channel. F(1) has five subunits: alpha(3), beta(3), gamma(1), delta(1), epsilon(1). F(0) has three main subunits: a(1), b(2) and c(10-14). The alpha and beta chains form an alternating ring which encloses part of the gamma chain. F(1) is attached to F(0) by a central stalk formed by the gamma and epsilon chains, while a peripheral stalk is formed by the delta and b chains.

It localises to the cell inner membrane. In terms of biological role, f(1)F(0) ATP synthase produces ATP from ADP in the presence of a proton or sodium gradient. F-type ATPases consist of two structural domains, F(1) containing the extramembraneous catalytic core and F(0) containing the membrane proton channel, linked together by a central stalk and a peripheral stalk. During catalysis, ATP synthesis in the catalytic domain of F(1) is coupled via a rotary mechanism of the central stalk subunits to proton translocation. Its function is as follows. Key component of the F(0) channel; it plays a direct role in translocation across the membrane. A homomeric c-ring of between 10-14 subunits forms the central stalk rotor element with the F(1) delta and epsilon subunits. The sequence is that of ATP synthase subunit c from Bacteroides fragilis (strain ATCC 25285 / DSM 2151 / CCUG 4856 / JCM 11019 / LMG 10263 / NCTC 9343 / Onslow / VPI 2553 / EN-2).